We begin with the raw amino-acid sequence, 64 residues long: DNA-binding protein 7a (64 aa).

2 positions are modified to N6-methyllysine; partial: Lys-5 and Lys-7.

This sequence belongs to the 7 kDa DNA-binding/endoribonuclease P2 family. As to quaternary structure, homodimer. Lys-5 and Lys-7 were found to be 60% monomethylated. Post-translationally, ADP-ribosylated by endogenous proteins in vitro.

In terms of biological role, can constrain negative DNA supercoils. May be involved in maintaining the integrity of the genome at high temperature. Has RNA endonuclease activity with a narrow substrate specificity; the cleavage products are 3'-phosphooligonucleotides. This Saccharolobus solfataricus (strain ATCC 35092 / DSM 1617 / JCM 11322 / P2) (Sulfolobus solfataricus) protein is DNA-binding protein 7a (sso7a1).